The chain runs to 181 residues: Large ribosomal subunit protein uL5 (181 aa).

It belongs to the universal ribosomal protein uL5 family. Part of the 50S ribosomal subunit; part of the 5S rRNA/L5/L18/L25 subcomplex. Contacts the 5S rRNA and the P site tRNA. Forms a bridge to the 30S subunit in the 70S ribosome.

Functionally, this is one of the proteins that bind and probably mediate the attachment of the 5S RNA into the large ribosomal subunit, where it forms part of the central protuberance. In the 70S ribosome it contacts protein S13 of the 30S subunit (bridge B1b), connecting the 2 subunits; this bridge is implicated in subunit movement. Contacts the P site tRNA; the 5S rRNA and some of its associated proteins might help stabilize positioning of ribosome-bound tRNAs. This chain is Large ribosomal subunit protein uL5, found in Colwellia psychrerythraea (strain 34H / ATCC BAA-681) (Vibrio psychroerythus).